The primary structure comprises 346 residues: Holliday junction branch migration complex subunit RuvB (346 aa).

Residues 1–181 are large ATPase domain (RuvB-L); it reads MSDRNPLIDA…FGIPVRLNFY (181 aa). Residues Leu20, Arg21, Gly62, Lys65, Thr66, Thr67, 128–130, Arg171, Tyr181, and Arg218 contribute to the ATP site; that span reads EDF. Residue Thr66 coordinates Mg(2+). The tract at residues 182 to 252 is small ATPAse domain (RuvB-S); that stretch reads TVEELEYIVR…IADEALSRLE (71 aa). The head domain (RuvB-H) stretch occupies residues 255 to 346; sequence NRGLDQLDRR…SQYGLFMEDE (92 aa). DNA-binding residues include Arg291, Arg310, and Arg315.

This sequence belongs to the RuvB family. As to quaternary structure, homohexamer. Forms an RuvA(8)-RuvB(12)-Holliday junction (HJ) complex. HJ DNA is sandwiched between 2 RuvA tetramers; dsDNA enters through RuvA and exits via RuvB. An RuvB hexamer assembles on each DNA strand where it exits the tetramer. Each RuvB hexamer is contacted by two RuvA subunits (via domain III) on 2 adjacent RuvB subunits; this complex drives branch migration. In the full resolvosome a probable DNA-RuvA(4)-RuvB(12)-RuvC(2) complex forms which resolves the HJ.

It is found in the cytoplasm. It catalyses the reaction ATP + H2O = ADP + phosphate + H(+). The RuvA-RuvB-RuvC complex processes Holliday junction (HJ) DNA during genetic recombination and DNA repair, while the RuvA-RuvB complex plays an important role in the rescue of blocked DNA replication forks via replication fork reversal (RFR). RuvA specifically binds to HJ cruciform DNA, conferring on it an open structure. The RuvB hexamer acts as an ATP-dependent pump, pulling dsDNA into and through the RuvAB complex. RuvB forms 2 homohexamers on either side of HJ DNA bound by 1 or 2 RuvA tetramers; 4 subunits per hexamer contact DNA at a time. Coordinated motions by a converter formed by DNA-disengaged RuvB subunits stimulates ATP hydrolysis and nucleotide exchange. Immobilization of the converter enables RuvB to convert the ATP-contained energy into a lever motion, pulling 2 nucleotides of DNA out of the RuvA tetramer per ATP hydrolyzed, thus driving DNA branch migration. The RuvB motors rotate together with the DNA substrate, which together with the progressing nucleotide cycle form the mechanistic basis for DNA recombination by continuous HJ branch migration. Branch migration allows RuvC to scan DNA until it finds its consensus sequence, where it cleaves and resolves cruciform DNA. This is Holliday junction branch migration complex subunit RuvB from Brucella suis (strain ATCC 23445 / NCTC 10510).